We begin with the raw amino-acid sequence, 454 residues long: tRNA modification GTPase MnmE (454 aa).

The (6S)-5-formyl-5,6,7,8-tetrahydrofolate site is built by Arg-23, Glu-80, and Lys-120. The 162-residue stretch at 216-377 (GMKVVIAGRP…LRNHLKQSMG (162 aa)) folds into the TrmE-type G domain. Asn-226 is a K(+) binding site. Residues 226–231 (NAGKSS), 245–251 (TDIAGTT), 270–273 (DTAG), 335–338 (NKAD), and 358–360 (SAR) contribute to the GTP site. Ser-230 lines the Mg(2+) pocket. Thr-245, Ile-247, and Thr-250 together coordinate K(+). Thr-251 is a binding site for Mg(2+). Residue Lys-454 coordinates (6S)-5-formyl-5,6,7,8-tetrahydrofolate.

The protein belongs to the TRAFAC class TrmE-Era-EngA-EngB-Septin-like GTPase superfamily. TrmE GTPase family. In terms of assembly, homodimer. Heterotetramer of two MnmE and two MnmG subunits. K(+) serves as cofactor.

Its subcellular location is the cytoplasm. In terms of biological role, exhibits a very high intrinsic GTPase hydrolysis rate. Involved in the addition of a carboxymethylaminomethyl (cmnm) group at the wobble position (U34) of certain tRNAs, forming tRNA-cmnm(5)s(2)U34. The sequence is that of tRNA modification GTPase MnmE from Klebsiella pneumoniae (strain 342).